A 111-amino-acid chain; its full sequence is Putative gamma-glutamylcyclotransferase BH1612 (111 aa).

Position 14 to 17 (14 to 17) interacts with substrate; that stretch reads YGHL. Catalysis depends on glutamate 55, which acts as the Proton acceptor.

This sequence belongs to the gamma-glutamylcyclotransferase family.

In terms of biological role, putative gamma-glutamylcyclotransferase. The protein is Putative gamma-glutamylcyclotransferase BH1612 of Halalkalibacterium halodurans (strain ATCC BAA-125 / DSM 18197 / FERM 7344 / JCM 9153 / C-125) (Bacillus halodurans).